The sequence spans 335 residues: Ferredoxin--NADP reductase (335 aa).

Positions 35, 43, 48, 88, 122, 287, and 328 each coordinate FAD.

It belongs to the ferredoxin--NADP reductase type 2 family. As to quaternary structure, homodimer. The cofactor is FAD.

It catalyses the reaction 2 reduced [2Fe-2S]-[ferredoxin] + NADP(+) + H(+) = 2 oxidized [2Fe-2S]-[ferredoxin] + NADPH. This is Ferredoxin--NADP reductase from Thermus thermophilus (strain ATCC BAA-163 / DSM 7039 / HB27).